The chain runs to 469 residues: Probable lysophospholipase BODYGUARD 1 (469 aa).

An N-terminal signal peptide occupies residues 1 to 45 (MGFSRSLNRTVGVFVFFILDIVDFLLCFTYKTLDFFFESEWKPCY). C46 carries the N-palmitoyl cysteine lipid modification. Residues 185 to 439 (VVFIHGFLSS…IHVVPDKDHI (255 aa)) form the AB hydrolase-1 domain. H189 is an active-site residue. S263 functions as the Nucleophile in the catalytic mechanism. Catalysis depends on charge relay system residues D410 and H438.

Expressed exclusively in protodermal and epidermal cells of all organs, especially on adaxial sides.

The protein resides in the cell membrane. It is found in the secreted. It localises to the cell wall. In terms of biological role, controls cuticle development and morphogenesis, by promoting cutin and suberin monomers loading. Involved in the regulation of abscissic acid (ABA) biosynthesis in response to osmotic stress. Plays an important role in osmotic stress and drought resistance. Required to ensure a reduced permeability of aerial tissue, thus preventing transpiration. Regulates lateral root hair development. Its function is as follows. Required for infection by the pathogenic necrotrophic fungus Botrytis cinerea, probably by regulating structural traits of the cuticle. The protein is Probable lysophospholipase BODYGUARD 1 of Arabidopsis thaliana (Mouse-ear cress).